A 486-amino-acid chain; its full sequence is uncharacterized protein (486 aa).

24–35 contacts NAD(+); that stretch reads IVHLGFGAFHRA.

The protein belongs to the mannitol dehydrogenase family. UxuB subfamily.

This is an uncharacterized protein from Escherichia coli (strain K12).